We begin with the raw amino-acid sequence, 254 residues long: Protein PET122, mitochondrial (254 aa).

A mitochondrion-targeting transit peptide spans 1–8; it reads MLTITKRL. The essential for PET122 function stretch occupies residues 185 to 254; sequence QAAALALFGR…IKRRGFEINT (70 aa).

Its subcellular location is the mitochondrion inner membrane. In terms of biological role, required for expression of the mitochondrial gene for cytochrome c oxidase subunit 3 (COX3). PET122 seems to work by directly interacting with the small ribosomal subunit to promote translation initiation on the COX3 mRNA. In Saccharomyces cerevisiae (strain ATCC 204508 / S288c) (Baker's yeast), this protein is Protein PET122, mitochondrial (PET122).